Consider the following 141-residue polypeptide: Putative phosphatidylglycerol/phosphatidylinositol transfer protein DDB_G0278295 (141 aa).

A signal peptide spans 1–19 (MRLLLALFFVLALVSPSFT). Residues asparagine 82 and asparagine 104 are each glycosylated (N-linked (GlcNAc...) asparagine).

It belongs to the NPC2 family. As to quaternary structure, monomer.

Functionally, catalyzes the intermembrane transfer of phosphatidylglycerol and phosphatidylinositol. This is Putative phosphatidylglycerol/phosphatidylinositol transfer protein DDB_G0278295 from Dictyostelium discoideum (Social amoeba).